The primary structure comprises 159 residues: Large ribosomal subunit protein uL15 (159 aa).

Residues Met1–Gly11 are compositionally biased toward basic and acidic residues. The interval Met1–Ser40 is disordered. A compositionally biased stretch (gly residues) spans Arg21–Val35.

The protein belongs to the universal ribosomal protein uL15 family. In terms of assembly, part of the 50S ribosomal subunit.

Functionally, binds to the 23S rRNA. This Paramagnetospirillum magneticum (strain ATCC 700264 / AMB-1) (Magnetospirillum magneticum) protein is Large ribosomal subunit protein uL15.